A 117-amino-acid polypeptide reads, in one-letter code: Transcription elongation factor A protein-like 8 (117 aa).

Residues 1–82 (MQKSCDENEG…EEVIRGVDEL (82 aa)) form a disordered region. Over residues 41–82 (NVREETEGSHRGEPAEPSPEPKEDTPARHLNPEEVIRGVDEL) the composition is skewed to basic and acidic residues. Residues 73 to 100 (EEVIRGVDELERLREEIRRVRNKFVLMH) are a coiled coil.

This sequence belongs to the TFS-II family. TFA subfamily.

The protein resides in the nucleus. May be involved in transcriptional regulation. This chain is Transcription elongation factor A protein-like 8 (Tceal8), found in Mus musculus (Mouse).